The following is a 207-amino-acid chain: Large ribosomal subunit protein uL4 (207 aa).

A disordered region spans residues 44-77 (RRQGTHDTKTRSEVRGGGRKPWRQKGTGRARHGT). Positions 47-59 (GTHDTKTRSEVRG) are enriched in basic and acidic residues. Positions 60–77 (GGRKPWRQKGTGRARHGT) are enriched in basic residues.

This sequence belongs to the universal ribosomal protein uL4 family. As to quaternary structure, part of the 50S ribosomal subunit.

In terms of biological role, one of the primary rRNA binding proteins, this protein initially binds near the 5'-end of the 23S rRNA. It is important during the early stages of 50S assembly. It makes multiple contacts with different domains of the 23S rRNA in the assembled 50S subunit and ribosome. Its function is as follows. Forms part of the polypeptide exit tunnel. This is Large ribosomal subunit protein uL4 from Desulforudis audaxviator (strain MP104C).